The primary structure comprises 419 residues: Light-independent protochlorophyllide reductase subunit N (419 aa).

Positions 17, 42, and 103 each coordinate [4Fe-4S] cluster.

Belongs to the BchN/ChlN family. As to quaternary structure, protochlorophyllide reductase is composed of three subunits; ChlL, ChlN and ChlB. Forms a heterotetramer of two ChlB and two ChlN subunits. The cofactor is [4Fe-4S] cluster.

It catalyses the reaction chlorophyllide a + oxidized 2[4Fe-4S]-[ferredoxin] + 2 ADP + 2 phosphate = protochlorophyllide a + reduced 2[4Fe-4S]-[ferredoxin] + 2 ATP + 2 H2O. It functions in the pathway porphyrin-containing compound metabolism; chlorophyll biosynthesis (light-independent). Functionally, component of the dark-operative protochlorophyllide reductase (DPOR) that uses Mg-ATP and reduced ferredoxin to reduce ring D of protochlorophyllide (Pchlide) to form chlorophyllide a (Chlide). This reaction is light-independent. The NB-protein (ChlN-ChlB) is the catalytic component of the complex. This is Light-independent protochlorophyllide reductase subunit N from Prochlorococcus marinus (strain NATL1A).